An 877-amino-acid chain; its full sequence is Leucine--tRNA ligase (877 aa).

The 'HIGH' region motif lies at 50–60 (PYPSGKLHMGH). The 'KMSKS' region signature appears at 634–638 (KMSKS). An ATP-binding site is contributed by K637.

Belongs to the class-I aminoacyl-tRNA synthetase family.

The protein resides in the cytoplasm. It carries out the reaction tRNA(Leu) + L-leucine + ATP = L-leucyl-tRNA(Leu) + AMP + diphosphate. The chain is Leucine--tRNA ligase from Hydrogenovibrio crunogenus (strain DSM 25203 / XCL-2) (Thiomicrospira crunogena).